The following is a 695-amino-acid chain: Lysophospholipase 2 (695 aa).

The first 19 residues, 1-19, serve as a signal peptide directing secretion; that stretch reads MQLSVLIASVLAAGAAVDA. Asn-26, Asn-72, Asn-83, Asn-115, Asn-152, Asn-171, Asn-207, Asn-269, Asn-335, Asn-379, Asn-480, Asn-504, Asn-513, Asn-532, Asn-556, Asn-573, Asn-620, Asn-626, Asn-644, and Asn-648 each carry an N-linked (GlcNAc...) asparagine glycan. The PLA2c domain occupies 28–577; sequence SCPDNANFIR…TNYCWNGTID (550 aa). Positions 612 to 662 are disordered; that stretch reads NTGSGTKSNSSSKTNSTLVTSSRATSTGTLISNSSSNSTVSSTAARSSTSS.

It belongs to the lysophospholipase family.

The protein localises to the secreted. It localises to the cell wall. It carries out the reaction a 1-acyl-sn-glycero-3-phosphocholine + H2O = sn-glycerol 3-phosphocholine + a fatty acid + H(+). In terms of biological role, catalyzes the release of fatty acids from lysophospholipids. Phospholipase B may well contribute to pathogenicity by abetting the fungus in damaging and traversing host cell membranes, processes which likely increase the rapidity of disseminated infection. The sequence is that of Lysophospholipase 2 from Candida glabrata (strain ATCC 2001 / BCRC 20586 / JCM 3761 / NBRC 0622 / NRRL Y-65 / CBS 138) (Yeast).